Here is a 288-residue protein sequence, read N- to C-terminus: MVNDTSENQPTTAGIVTTTEDELILQDQQMKRIEDEQKASPLVGEKMPCATLVSLYDQETAPAFFEKANELAKVYSHIRFIRGDGNCFIRAIQVGLVEILLNDKERLVKFIASCKEWTERLVKLGFPDWTCTDFCEFFIEFIEKVRDGIHQKEDVFRIFNDDNTANYLLMFFRLITSGYLKEHAAEYEPFLDEGMSLAQYCETEIEAMWKESDHLGIIALVRALNIRIRIEYMDRNAAPNGGTHHNLPDGHDNATFTPDITLLYRPGHYDLIYKAPAETSKPALPPVA.

Residues 76 to 275 (SHIRFIRGDG…PGHYDLIYKA (200 aa)) enclose the OTU domain. Asp84 is an active-site residue. The active-site Nucleophile is the Cys87. Ile175 contacts substrate. Catalysis depends on residues His244 and His268.

This sequence belongs to the peptidase C65 family.

The enzyme catalyses Thiol-dependent hydrolysis of ester, thioester, amide, peptide and isopeptide bonds formed by the C-terminal Gly of ubiquitin (a 76-residue protein attached to proteins as an intracellular targeting signal).. Its function is as follows. Hydrolase that can remove conjugated ubiquitin from proteins and plays an important regulatory role at the level of protein turnover by preventing degradation. Specifically cleaves 'Lys-48'-linked polyubiquitin. This chain is Ubiquitin thioesterase otubain-like, found in Caenorhabditis briggsae.